The following is a 150-amino-acid chain: Catabolic 3-dehydroquinase 1 (150 aa).

Tyr24 functions as the Proton acceptor in the catalytic mechanism. The substrate site is built by Asn75, His81, and Asp88. Catalysis depends on His101, which acts as the Proton donor. Residues Val102 to Ser103 and Arg112 contribute to the substrate site.

The protein belongs to the type-II 3-dehydroquinase family. As to quaternary structure, homododecamer. Adopts a ring-like structure, composed of an arrangement of two hexameric rings stacked on top of one another.

The enzyme catalyses 3-dehydroquinate = 3-dehydroshikimate + H2O. It functions in the pathway aromatic compound metabolism; 3,4-dihydroxybenzoate biosynthesis; 3,4-dihydroxybenzoate from 3-dehydroquinate: step 1/2. Is involved in the catabolism of quinate. Allows the utilization of quinate as carbon source via the beta-ketoadipate pathway. The sequence is that of Catabolic 3-dehydroquinase 1 from Neosartorya fischeri (strain ATCC 1020 / DSM 3700 / CBS 544.65 / FGSC A1164 / JCM 1740 / NRRL 181 / WB 181) (Aspergillus fischerianus).